The sequence spans 231 residues: Large ribosomal subunit protein uL1 (231 aa).

Belongs to the universal ribosomal protein uL1 family. Part of the 50S ribosomal subunit.

Functionally, binds directly to 23S rRNA. The L1 stalk is quite mobile in the ribosome, and is involved in E site tRNA release. In terms of biological role, protein L1 is also a translational repressor protein, it controls the translation of the L11 operon by binding to its mRNA. The sequence is that of Large ribosomal subunit protein uL1 from Acinetobacter baylyi (strain ATCC 33305 / BD413 / ADP1).